Reading from the N-terminus, the 453-residue chain is Trigger factor (453 aa).

The PPIase FKBP-type domain occupies Gly-171 to Ser-256.

Belongs to the FKBP-type PPIase family. Tig subfamily.

The protein resides in the cytoplasm. The enzyme catalyses [protein]-peptidylproline (omega=180) = [protein]-peptidylproline (omega=0). In terms of biological role, involved in protein export. Acts as a chaperone by maintaining the newly synthesized protein in an open conformation. Functions as a peptidyl-prolyl cis-trans isomerase. This is Trigger factor from Rhodopseudomonas palustris (strain BisB18).